The chain runs to 366 residues: uncharacterized protein (366 aa).

The active-site Proton donor is the Glu-139. The active-site Nucleophile is the Glu-249.

This sequence belongs to the glycosyl hydrolase 53 family.

This is an uncharacterized protein from Niallia circulans (Bacillus circulans).